The following is a 66-amino-acid chain: MSQPLTVDCPTCGAPVEWDAKNAFRPFCSDRCKLIDLGAWAAEEHKIAGSQESEDELYSGDLEPRH.

Zn(2+) is bound by residues Cys9, Cys12, Cys28, and Cys32. The segment at 45–66 (HKIAGSQESEDELYSGDLEPRH) is disordered.

The protein belongs to the DNA gyrase inhibitor YacG family. In terms of assembly, interacts with GyrB. Requires Zn(2+) as cofactor.

Inhibits all the catalytic activities of DNA gyrase by preventing its interaction with DNA. Acts by binding directly to the C-terminal domain of GyrB, which probably disrupts DNA binding by the gyrase. In Pseudomonas putida (strain W619), this protein is DNA gyrase inhibitor YacG.